Reading from the N-terminus, the 373-residue chain is Queuine tRNA-ribosyltransferase (373 aa).

Asp90 (proton acceptor) is an active-site residue. Substrate is bound by residues 90–94 (DSGGF), Asp144, Gln193, and Gly220. The RNA binding stretch occupies residues 251–257 (GVGTPED). The active-site Nucleophile is the Asp270. Residues 275-279 (TRNAR) are RNA binding; important for wobble base 34 recognition. The Zn(2+) site is built by Cys308, Cys310, Cys313, and His339.

It belongs to the queuine tRNA-ribosyltransferase family. Homodimer. Within each dimer, one monomer is responsible for RNA recognition and catalysis, while the other monomer binds to the replacement base PreQ1. It depends on Zn(2+) as a cofactor.

It carries out the reaction 7-aminomethyl-7-carbaguanine + guanosine(34) in tRNA = 7-aminomethyl-7-carbaguanosine(34) in tRNA + guanine. The protein operates within tRNA modification; tRNA-queuosine biosynthesis. Functionally, catalyzes the base-exchange of a guanine (G) residue with the queuine precursor 7-aminomethyl-7-deazaguanine (PreQ1) at position 34 (anticodon wobble position) in tRNAs with GU(N) anticodons (tRNA-Asp, -Asn, -His and -Tyr). Catalysis occurs through a double-displacement mechanism. The nucleophile active site attacks the C1' of nucleotide 34 to detach the guanine base from the RNA, forming a covalent enzyme-RNA intermediate. The proton acceptor active site deprotonates the incoming PreQ1, allowing a nucleophilic attack on the C1' of the ribose to form the product. After dissociation, two additional enzymatic reactions on the tRNA convert PreQ1 to queuine (Q), resulting in the hypermodified nucleoside queuosine (7-(((4,5-cis-dihydroxy-2-cyclopenten-1-yl)amino)methyl)-7-deazaguanosine). This is Queuine tRNA-ribosyltransferase from Campylobacter jejuni subsp. jejuni serotype O:2 (strain ATCC 700819 / NCTC 11168).